The chain runs to 396 residues: Calcium-responsive transactivator (396 aa).

Residues 1–148 are N-terminal auto-inhibitory domain; necessary for interaction with SMARCA4/BRG1; it reads MSVAFASARP…TLPTTSMSIS (148 aa). The short motif at 50 to 53 is the SH2-binding element; it reads YQQI. Disordered stretches follow at residues 72–162, 192–280, and 311–396; these read QSLL…SQGV, QAAT…GDYA, and SQQQ…NYQQ. Residues 90-106 are compositionally biased toward low complexity; that stretch reads LTQSGSSQGLHSQGSLS. Polar residues-rich tracts occupy residues 107-122 and 128-147; these read DAISTGLPPSSLLQGQ and SHVSMQQTAPNTLPTTSMSI. Residues 149-232 are methionine-rich intra-molecular domain; sequence GPGYSHAGPA…GSSMMGQRPM (84 aa). Low complexity-rich tracts occupy residues 199-229, 238-261, and 311-369; these read SSAQGGSQHYQGQSSIAMMGQGSQGSSMMGQ, SQQGSSQQYLGQEEYYGEQYSHSQ, and SQQQ…YGSY. The MFD domain stretch occupies residues 246-317; the sequence is YLGQEEYYGE…SQYSQQQAGY (72 aa). A necessary for nuclear localization region spans residues 334-396; sequence SQQSYPGQQQ…EQGQYGNYQQ (63 aa). Residues 353–356 carry the SH2-binding motif; it reads SQYP. The short motif at 371–379 is the SH3-binding element; it reads APQTAPSAQ. The span at 384–396 shows a compositional bias: low complexity; sequence YGYEQGQYGNYQQ. Residues 387–396 form a necessary for interaction with CREBBP and for the recruitment of CREBBP to the nuclear bodies region; it reads EQGQYGNYQQ. The short motif at 391-394 is the SH2-binding element; the sequence is YGNY.

Belongs to the SS18 family. Homodimer. Dimerization may be necessary for its function in neuronal dendritic development. Interacts (via C-terminus) with CREBBP (via N-terminus), EP300 and SMARCA4/BRG1. Interacts with the nBAF complex. Association with CREBBP facilitates transcription while the association with SMARCA4/BRG1 suppresses CREST-mediated transcription in resting neurons. As to expression, ubiquitous; with lowest levels in spleen.

It localises to the nucleus. The protein localises to the chromosome. Its subcellular location is the centromere. It is found in the kinetochore. Transcriptional activator which is required for calcium-dependent dendritic growth and branching in cortical neurons. Recruits CREB-binding protein (CREBBP) to nuclear bodies. Component of the CREST-BRG1 complex, a multiprotein complex that regulates promoter activation by orchestrating a calcium-dependent release of a repressor complex and a recruitment of an activator complex. In resting neurons, transcription of the c-FOS promoter is inhibited by BRG1-dependent recruitment of a phospho-RB1-HDAC1 repressor complex. Upon calcium influx, RB1 is dephosphorylated by calcineurin, which leads to release of the repressor complex. At the same time, there is increased recruitment of CREBBP to the promoter by a CREST-dependent mechanism, which leads to transcriptional activation. The CREST-BRG1 complex also binds to the NR2B promoter, and activity-dependent induction of NR2B expression involves a release of HDAC1 and recruitment of CREBBP. The chain is Calcium-responsive transactivator (SS18L1) from Homo sapiens (Human).